Consider the following 133-residue polypeptide: Hydrogenase maturation factor HypA (133 aa).

Residue His-2 participates in Ni(2+) binding. 4 residues coordinate Zn(2+): Cys-73, Cys-75, Cys-105, and Cys-108.

It belongs to the HypA/HybF family.

Involved in the maturation of [NiFe] hydrogenases. Required for nickel insertion into the metal center of the hydrogenase. This chain is Hydrogenase maturation factor HypA, found in Methanosarcina barkeri (strain Fusaro / DSM 804).